Here is a 395-residue protein sequence, read N- to C-terminus: Chorismate synthase (395 aa).

Positions 40 and 46 each coordinate NADP(+). The tract at residues 99–120 (PREGRNAPLSRPRPGHADLTGM) is disordered. Residues 134-136 (RSS), 256-257 (QA), Gly-301, 316-320 (KPIPS), and Arg-342 contribute to the FMN site.

The protein belongs to the chorismate synthase family. As to quaternary structure, homotetramer. Requires FMNH2 as cofactor.

The enzyme catalyses 5-O-(1-carboxyvinyl)-3-phosphoshikimate = chorismate + phosphate. It functions in the pathway metabolic intermediate biosynthesis; chorismate biosynthesis; chorismate from D-erythrose 4-phosphate and phosphoenolpyruvate: step 7/7. In terms of biological role, catalyzes the anti-1,4-elimination of the C-3 phosphate and the C-6 proR hydrogen from 5-enolpyruvylshikimate-3-phosphate (EPSP) to yield chorismate, which is the branch point compound that serves as the starting substrate for the three terminal pathways of aromatic amino acid biosynthesis. This reaction introduces a second double bond into the aromatic ring system. The chain is Chorismate synthase from Bifidobacterium longum (strain DJO10A).